The primary structure comprises 326 residues: Vitamin B12 import system permease protein BtuC (326 aa).

The next 9 membrane-spanning stretches (helical) occupy residues 15 to 35 (WLLCLSVLMLLALLLSLCAGE), 61 to 81 (LAVLLVGAALAISGAVMQALF), 88 to 108 (PGLLGVSNGAGVGLIAAVLLG), 112 to 132 (LPNWALGLCAIAGALIITLIL), 146 to 166 (LLAGVALGIICSALMTWAIYF), 184 to 204 (GGVDWRQSWLMLALIPVLLWI), 240 to 260 (GWMVGVSVALAGAIGFIGLVI), 274 to 294 (VLLPGCALAGASALLLADVVA), and 302 to 322 (ELPIGVVTATLGAPVFIWLLL).

The protein belongs to the binding-protein-dependent transport system permease family. FecCD subfamily. In terms of assembly, the complex is composed of two ATP-binding proteins (BtuD), two transmembrane proteins (BtuC) and a solute-binding protein (BtuF).

It localises to the cell inner membrane. Part of the ABC transporter complex BtuCDF involved in vitamin B12 import. Involved in the translocation of the substrate across the membrane. The chain is Vitamin B12 import system permease protein BtuC from Escherichia coli O8 (strain IAI1).